We begin with the raw amino-acid sequence, 430 residues long: Dihydrolipoyllysine-residue acetyltransferase component of pyruvate dehydrogenase complex (430 aa).

Residues 2–77 (AFEFRLPDIG…VVGDVIVKID (76 aa)) enclose the Lipoyl-binding domain. Position 43 is an N6-lipoyllysine (Lys-43). Residues 80 to 122 (DAEDMQFKGHDDDSSSKEEPAKEEAPAEQAPVATQTEEVDENR) form a disordered region. Over residues 84–104 (MQFKGHDDDSSSKEEPAKEEA) the composition is skewed to basic and acidic residues. One can recognise a Peripheral subunit-binding (PSBD) domain in the interval 125-162 (KAMPSVRKYAREKGVNIKAVSGSGKNGRITKEDVDAYL). Residues 165 to 199 (GAPTASNESAASATNEEVAETPAAPAAVSLEGDFP) are disordered. Over residues 168 to 192 (TASNESAASATNEEVAETPAAPAAV) the composition is skewed to low complexity. His-401 is a catalytic residue.

Belongs to the 2-oxoacid dehydrogenase family. In terms of assembly, forms a 24-polypeptide structural core with octahedral symmetry. Requires (R)-lipoate as cofactor.

It catalyses the reaction N(6)-[(R)-dihydrolipoyl]-L-lysyl-[protein] + acetyl-CoA = N(6)-[(R)-S(8)-acetyldihydrolipoyl]-L-lysyl-[protein] + CoA. Functionally, the pyruvate dehydrogenase complex catalyzes the overall conversion of pyruvate to acetyl-CoA and CO(2). It contains multiple copies of three enzymatic components: pyruvate dehydrogenase (E1), dihydrolipoamide acetyltransferase (E2) and lipoamide dehydrogenase (E3). This is Dihydrolipoyllysine-residue acetyltransferase component of pyruvate dehydrogenase complex (pdhC) from Staphylococcus aureus (strain MRSA252).